A 122-amino-acid chain; its full sequence is Large ribosomal subunit protein uL14 (122 aa).

The protein belongs to the universal ribosomal protein uL14 family. As to quaternary structure, part of the 50S ribosomal subunit. Forms a cluster with proteins L3 and L19. In the 70S ribosome, L14 and L19 interact and together make contacts with the 16S rRNA in bridges B5 and B8.

Functionally, binds to 23S rRNA. Forms part of two intersubunit bridges in the 70S ribosome. In Thermosipho africanus (strain TCF52B), this protein is Large ribosomal subunit protein uL14.